Here is a 423-residue protein sequence, read N- to C-terminus: Phosphoribosylamine--glycine ligase (423 aa).

The 206-residue stretch at 107 to 312 (KDLCARYDIP…LLPILYATAT (206 aa)) folds into the ATP-grasp domain. An ATP-binding site is contributed by 133-193 (VRAQGAPIVI…EAFLDGEEAS (61 aa)). Glutamate 282 and asparagine 284 together coordinate Mg(2+).

This sequence belongs to the GARS family. Mg(2+) is required as a cofactor. It depends on Mn(2+) as a cofactor.

The enzyme catalyses 5-phospho-beta-D-ribosylamine + glycine + ATP = N(1)-(5-phospho-beta-D-ribosyl)glycinamide + ADP + phosphate + H(+). It functions in the pathway purine metabolism; IMP biosynthesis via de novo pathway; N(1)-(5-phospho-D-ribosyl)glycinamide from 5-phospho-alpha-D-ribose 1-diphosphate: step 2/2. This Agrobacterium fabrum (strain C58 / ATCC 33970) (Agrobacterium tumefaciens (strain C58)) protein is Phosphoribosylamine--glycine ligase.